The primary structure comprises 146 residues: uncharacterized protein (146 aa).

The HTH marR-type domain maps to 9–141 (VADIEKSLRH…FEKSLMKLQH (133 aa)). The segment at residues 55-78 (IGELSGKMYLACSTTTDLIDRMQK) is a DNA-binding region (H-T-H motif).

This is an uncharacterized protein from Bacillus subtilis (strain 168).